A 451-amino-acid polypeptide reads, in one-letter code: Lipase member H (451 aa).

The signal sequence occupies residues 1–16 (MLRLCFLLSFMCLVKS). N-linked (GlcNAc...) asparagine glycosylation is present at Asn66. Ser154 (nucleophile) is an active-site residue. The Charge relay system role is filled by Asp178. Cysteines 233 and 246 form a disulfide. Catalysis depends on His248, which acts as the Charge relay system. Disulfide bonds link Cys270–Cys281, Cys284–Cys292, and Cys427–Cys446.

This sequence belongs to the AB hydrolase superfamily. Lipase family. As to quaternary structure, interacts with TTMP/C3orf52.

The protein localises to the secreted. It localises to the cell membrane. It catalyses the reaction 1-hexadecanoyl-2-(9Z-octadecenoyl)-sn-glycero-3-phosphate + H2O = 2-(9Z-octadecenoyl)-sn-glycero-3-phosphate + hexadecanoate + H(+). In terms of biological role, hydrolyzes specifically phosphatidic acid (PA) to produce 2-acyl lysophosphatidic acid (LPA; a potent bioactive lipid mediator) and fatty acid. Does not hydrolyze other phospholipids, like phosphatidylserine (PS), phosphatidylcholine (PC) and phosphatidylethanolamine (PE) or triacylglycerol (TG). This is Lipase member H (Liph) from Rattus norvegicus (Rat).